The primary structure comprises 544 residues: MTKFIFVTGGVVSSLGKGIAAASIAAILESRGLNVTMLKLDPYINVDPGTMSPFQHGEVFVTDDGAETDLDLGHYERFIDSTMTRRNSFSTGQVYENVIAKERRGDYLGGTVQVIPHITDEIKRRIHEGAAGYDVAIVEIGGTVGDIESLPFLEAIRQMRSQLGRNNTLFAHLSYVPYIAAAGEIKTKPTQHTVKEMLSIGLQPDILICRMDRKMPADERRKIALFCNVEERAIVGSYDVDSIYECPEMLHDQGIDNIITEQLQLNVQQADLTAWKKIVHAVKNPKHTVKIAMVGKYVDLTESYKSLIEALKHAGIHTETDVQITFVDSESIEKNKGDVSVLKDMDAILVPGGFGSRGVEGKIAAVRYARENNVPYLGICLGMQIALIEYARDVAGLKGANSTEFDLKCAAPVVALIDEWQTADGSVETRDESADLGGTMRLGAQEVELKAGSLAVKIYGSGHIRERHRHRYEVNNNYVSALEQAGLVIGGVSAGRERLVETIELPNHPWFFACQFHPEFTSNPRKGHPLFTAFVKAALNNKKA.

The interval 1–265 is amidoligase domain; that stretch reads MTKFIFVTGG…DNIITEQLQL (265 aa). CTP is bound at residue serine 13. Position 13 (serine 13) interacts with UTP. ATP is bound by residues 14-19 and aspartate 71; that span reads SLGKGI. Aspartate 71 and glutamate 139 together coordinate Mg(2+). Residues 146-148, 186-191, and lysine 222 each bind CTP; these read DIE and KTKPTQ. UTP is bound by residues 186 to 191 and lysine 222; that span reads KTKPTQ. The 255-residue stretch at 290–544 folds into the Glutamine amidotransferase type-1 domain; sequence KIAMVGKYVD…VKAALNNKKA (255 aa). Glycine 353 is a binding site for L-glutamine. Cysteine 380 functions as the Nucleophile; for glutamine hydrolysis in the catalytic mechanism. L-glutamine contacts are provided by residues 381–384, glutamate 404, and arginine 471; that span reads LGMQ. Catalysis depends on residues histidine 517 and glutamate 519.

The protein belongs to the CTP synthase family. Homotetramer.

It carries out the reaction UTP + L-glutamine + ATP + H2O = CTP + L-glutamate + ADP + phosphate + 2 H(+). The enzyme catalyses L-glutamine + H2O = L-glutamate + NH4(+). It catalyses the reaction UTP + NH4(+) + ATP = CTP + ADP + phosphate + 2 H(+). It participates in pyrimidine metabolism; CTP biosynthesis via de novo pathway; CTP from UDP: step 2/2. Its activity is regulated as follows. Allosterically activated by GTP, when glutamine is the substrate; GTP has no effect on the reaction when ammonia is the substrate. The allosteric effector GTP functions by stabilizing the protein conformation that binds the tetrahedral intermediate(s) formed during glutamine hydrolysis. Inhibited by the product CTP, via allosteric rather than competitive inhibition. In terms of biological role, catalyzes the ATP-dependent amination of UTP to CTP with either L-glutamine or ammonia as the source of nitrogen. Regulates intracellular CTP levels through interactions with the four ribonucleotide triphosphates. This is CTP synthase from Neisseria gonorrhoeae (strain ATCC 700825 / FA 1090).